An 83-amino-acid polypeptide reads, in one-letter code: Short neurotoxin VAN-10 (83 aa).

The N-terminal stretch at 1–21 (MKTLLLTLVVVTIVCLDLGYT) is a signal peptide. Cystine bridges form between C24–C45, C38–C62, C64–C75, and C76–C81.

Belongs to the three-finger toxin family. Short-chain subfamily. Type I alpha-neurotoxin sub-subfamily. Expressed by the venom gland.

It is found in the secreted. Binds to muscle nicotinic acetylcholine receptor (nAChR) and inhibit acetylcholine from binding to the receptor, thereby impairing neuromuscular transmission. The protein is Short neurotoxin VAN-10 of Laticauda laticaudata (Blue-ringed sea krait).